Consider the following 506-residue polypeptide: Bifunctional purine biosynthesis protein PurH (506 aa).

The MGS-like domain maps to 1-142 (MRAIISVYRK…KNFFRVVILV (142 aa)).

It belongs to the PurH family.

The enzyme catalyses (6R)-10-formyltetrahydrofolate + 5-amino-1-(5-phospho-beta-D-ribosyl)imidazole-4-carboxamide = 5-formamido-1-(5-phospho-D-ribosyl)imidazole-4-carboxamide + (6S)-5,6,7,8-tetrahydrofolate. It carries out the reaction IMP + H2O = 5-formamido-1-(5-phospho-D-ribosyl)imidazole-4-carboxamide. Its pathway is purine metabolism; IMP biosynthesis via de novo pathway; 5-formamido-1-(5-phospho-D-ribosyl)imidazole-4-carboxamide from 5-amino-1-(5-phospho-D-ribosyl)imidazole-4-carboxamide (10-formyl THF route): step 1/1. It participates in purine metabolism; IMP biosynthesis via de novo pathway; IMP from 5-formamido-1-(5-phospho-D-ribosyl)imidazole-4-carboxamide: step 1/1. This chain is Bifunctional purine biosynthesis protein PurH, found in Aquifex aeolicus (strain VF5).